Consider the following 698-residue polypeptide: MOXD1 homolog 1 (698 aa).

Positions 1–20 (MSVQDVLWIVLTVQLSFGLA) are cleaved as a signal peptide. Asn-36, Asn-140, and Asn-221 each carry an N-linked (GlcNAc...) asparagine glycan. A DOMON domain is found at 54 to 174 (GLYWLKWWIN…DTFKVLWSIG (121 aa)). Residue Tyr-232 is part of the active site. His-265 and His-266 together coordinate Cu cation. A disulfide bridge connects residues Cys-272 and Cys-309. Residues His-347, His-425, and His-427 each coordinate Cu cation. 2 cysteine pairs are disulfide-bonded: Cys-403/Cys-516 and Cys-479/Cys-501. Residue His-425 is part of the active site. The N-linked (GlcNAc...) asparagine glycan is linked to Asn-465. Residue Met-500 coordinates Cu cation. 2 N-linked (GlcNAc...) asparagine glycosylation sites follow: Asn-538 and Asn-561.

Belongs to the copper type II ascorbate-dependent monooxygenase family. It depends on Cu(2+) as a cofactor.

Its subcellular location is the secreted. This chain is MOXD1 homolog 1, found in Drosophila melanogaster (Fruit fly).